A 104-amino-acid chain; its full sequence is Glutaredoxin-C15 (104 aa).

Residues Met-1–Trp-103 enclose the Glutaredoxin domain. Cysteines 21 and 24 form a disulfide.

It belongs to the glutaredoxin family. CC-type subfamily.

It localises to the cytoplasm. Functionally, has a glutathione-disulfide oxidoreductase activity in the presence of NADPH and glutathione reductase. Reduces low molecular weight disulfides and proteins. The chain is Glutaredoxin-C15 (GRXC15) from Oryza sativa subsp. japonica (Rice).